The sequence spans 158 residues: Transcription elongation factor GreA (158 aa).

Positions 47-75 (ENSEYDAAKDEQAFVEQRITQVEKMIRNA) form a coiled coil.

The protein belongs to the GreA/GreB family.

In terms of biological role, necessary for efficient RNA polymerase transcription elongation past template-encoded arresting sites. The arresting sites in DNA have the property of trapping a certain fraction of elongating RNA polymerases that pass through, resulting in locked ternary complexes. Cleavage of the nascent transcript by cleavage factors such as GreA or GreB allows the resumption of elongation from the new 3'terminus. GreA releases sequences of 2 to 3 nucleotides. This is Transcription elongation factor GreA from Oceanobacillus iheyensis (strain DSM 14371 / CIP 107618 / JCM 11309 / KCTC 3954 / HTE831).